Here is a 99-residue protein sequence, read N- to C-terminus: Aspartyl/glutamyl-tRNA(Asn/Gln) amidotransferase subunit C (99 aa).

Belongs to the GatC family. Heterotrimer of A, B and C subunits.

The enzyme catalyses L-glutamyl-tRNA(Gln) + L-glutamine + ATP + H2O = L-glutaminyl-tRNA(Gln) + L-glutamate + ADP + phosphate + H(+). It catalyses the reaction L-aspartyl-tRNA(Asn) + L-glutamine + ATP + H2O = L-asparaginyl-tRNA(Asn) + L-glutamate + ADP + phosphate + 2 H(+). Functionally, allows the formation of correctly charged Asn-tRNA(Asn) or Gln-tRNA(Gln) through the transamidation of misacylated Asp-tRNA(Asn) or Glu-tRNA(Gln) in organisms which lack either or both of asparaginyl-tRNA or glutaminyl-tRNA synthetases. The reaction takes place in the presence of glutamine and ATP through an activated phospho-Asp-tRNA(Asn) or phospho-Glu-tRNA(Gln). The chain is Aspartyl/glutamyl-tRNA(Asn/Gln) amidotransferase subunit C from Polaromonas sp. (strain JS666 / ATCC BAA-500).